The following is a 348-amino-acid chain: Putative transport protein HI_0338 (348 aa).

9 consecutive transmembrane segments (helical) span residues 7–27 (LHRTLLGIAAVIIILAGVKLA), 28–48 (AEIVVPFLLSLFIAIICSPII), 60–80 (LAITLLFVLISLVFFFLVGLI), 139–159 (VLLNFSGVVSNVFVLVLVVIF), 196–216 (VIGYLGIKSITSLLTGVGVFI), 223–243 (VQYAILWATLSFLLNYIPNIG), 245–265 (IIAAIPIIVQALLLNGFGIGF), 267–287 (VAIGVIAINMVVGNIIEPKMM), and 296–316 (LVVFLSLLFWGWLLGTVGMLL).

This sequence belongs to the autoinducer-2 exporter (AI-2E) (TC 2.A.86) family.

The protein localises to the cell membrane. The chain is Putative transport protein HI_0338 from Haemophilus influenzae (strain ATCC 51907 / DSM 11121 / KW20 / Rd).